The sequence spans 175 residues: uncharacterized protein (175 aa).

Residues 107–138 (KTEEEAEKTLQEIERKIFKKLWENLDKERKRE) are a coiled coil.

This is an uncharacterized protein from Aquifex aeolicus (strain VF5).